A 459-amino-acid polypeptide reads, in one-letter code: Bifunctional protein GlmU (459 aa).

The tract at residues 1 to 229 is pyrophosphorylase; that stretch reads MSNFAIILAA…FDESLGVNDR (229 aa). Residues 8 to 11, Lys22, Gln72, and 77 to 78 contribute to the UDP-N-acetyl-alpha-D-glucosamine site; these read LAAG and GT. Position 102 (Asp102) interacts with Mg(2+). Positions 139, 154, 169, and 227 each coordinate UDP-N-acetyl-alpha-D-glucosamine. Asn227 contacts Mg(2+). A linker region spans residues 230–250; it reads VALATAESVMRRRINHKHMVN. The tract at residues 251-459 is N-acetyltransferase; the sequence is GVSFVNPEAT…TRLPHHPKNQ (209 aa). 2 residues coordinate UDP-N-acetyl-alpha-D-glucosamine: Arg332 and Lys350. The active-site Proton acceptor is the His362. Positions 365 and 376 each coordinate UDP-N-acetyl-alpha-D-glucosamine. Acetyl-CoA contacts are provided by residues Ala379, 385–386, Ser404, Ala422, and Arg439; that span reads NY.

This sequence in the N-terminal section; belongs to the N-acetylglucosamine-1-phosphate uridyltransferase family. In the C-terminal section; belongs to the transferase hexapeptide repeat family. As to quaternary structure, homotrimer. Requires Mg(2+) as cofactor.

It is found in the cytoplasm. The enzyme catalyses alpha-D-glucosamine 1-phosphate + acetyl-CoA = N-acetyl-alpha-D-glucosamine 1-phosphate + CoA + H(+). The catalysed reaction is N-acetyl-alpha-D-glucosamine 1-phosphate + UTP + H(+) = UDP-N-acetyl-alpha-D-glucosamine + diphosphate. The protein operates within nucleotide-sugar biosynthesis; UDP-N-acetyl-alpha-D-glucosamine biosynthesis; N-acetyl-alpha-D-glucosamine 1-phosphate from alpha-D-glucosamine 6-phosphate (route II): step 2/2. It functions in the pathway nucleotide-sugar biosynthesis; UDP-N-acetyl-alpha-D-glucosamine biosynthesis; UDP-N-acetyl-alpha-D-glucosamine from N-acetyl-alpha-D-glucosamine 1-phosphate: step 1/1. Its pathway is bacterial outer membrane biogenesis; LPS lipid A biosynthesis. Functionally, catalyzes the last two sequential reactions in the de novo biosynthetic pathway for UDP-N-acetylglucosamine (UDP-GlcNAc). The C-terminal domain catalyzes the transfer of acetyl group from acetyl coenzyme A to glucosamine-1-phosphate (GlcN-1-P) to produce N-acetylglucosamine-1-phosphate (GlcNAc-1-P), which is converted into UDP-GlcNAc by the transfer of uridine 5-monophosphate (from uridine 5-triphosphate), a reaction catalyzed by the N-terminal domain. The protein is Bifunctional protein GlmU of Streptococcus pneumoniae serotype 2 (strain D39 / NCTC 7466).